A 224-amino-acid polypeptide reads, in one-letter code: Synaptogyrin-2 (224 aa).

Met1 is modified (N-acetylmethionine). Ser3 is subject to Phosphoserine. Residues 20–171 (FLTQPQVVAR…LASLAYQRYK (152 aa)) enclose the MARVEL domain. The next 4 helical transmembrane spans lie at 26 to 46 (VVARAVCLVFALIVFSCIYGE), 73 to 93 (AIGVLAFLASAFFLVVDAYFP), 105 to 125 (VIGDLLFSALWTFLWFVGFCF), and 147 to 167 (AAITFSFFSIFSWGVLASLAY).

This sequence belongs to the synaptogyrin family. (Microbial infection) Interacts with SFTS phlebovirus protein NSs; may be involved in virus replication. May be tyrosine phosphorylated by Src. In terms of tissue distribution, ubiquitous; low expression in brain.

The protein localises to the cytoplasmic vesicle membrane. Its subcellular location is the cytoplasmic vesicle. It localises to the secretory vesicle. It is found in the synaptic vesicle membrane. The protein resides in the lipid droplet. Functionally, may play a role in regulated exocytosis. In neuronal cells, modulates the localization of synaptophysin/SYP into synaptic-like microvesicles and may therefore play a role in the formation and/or the maturation of this vesicles. May also play a role in GLUT4 storage and transport to the plasma membrane. (Microbial infection) May play a role in the assembly of cytoplasmic inclusion bodies required for SFTS phlebovirus replication. This chain is Synaptogyrin-2, found in Homo sapiens (Human).